A 488-amino-acid polypeptide reads, in one-letter code: MGLEVGSLCFKLKDGGLTSRTNSFKRDDTNRHQNSPKSTMERSLSFNSWEVPKETKTDSDFEVLETKKSTPNTLNGRNCERIQIKKPTVTPPEPFVFFSPRPVTELDAAATTLQKVYKSYRTRRNLADCAVVVEELWWRTLEGAALDLSSVSFFGEEKHETAVSKWARARKRAAKVGKGLSKDEKAQKLALQHWLEAIDPRHRYGHNLHFYYDVWSASKSTQPFFYWLDIGDGKDVNLEKHPRSVLQKQCIRYLGPMEREAYEVIVEDGRLMYKQGMTLINSTEEAKSIFVLSTTRNLYVGIKKKGLFQHSSFLSGGATTAAGRLVARDGILEAIWPYSGHYLPTEDNFKEFISFLEEHNVDLTNVKRCSVNEEYSSFKSTADEEEERKEVSEEVEIPSEKEERARPVFDPVKRLSCKWTSGYGPRIGCVRDYPMELQAQALEQVSLSPRVSPANSYGPIPSPRPSPKVRVSPRLAYMGIPSPRAVKC.

The tract at residues 20-46 (RTNSFKRDDTNRHQNSPKSTMERSLSF) is disordered. Residues 32–46 (HQNSPKSTMERSLSF) are compositionally biased toward polar residues. One can recognise an IQ domain in the interval 106–135 (LDAAATTLQKVYKSYRTRRNLADCAVVVEE). 2 disordered regions span residues 377-403 (SFKS…EKEE) and 448-472 (SPRV…VRVS). Residues 388–403 (RKEVSEEVEIPSEKEE) show a composition bias toward basic and acidic residues.

Interacts (via IQ domain) with CAM5. In terms of tissue distribution, highly expressed in leaf mesophyll cells. Expressed in roots, rosette and cauline leaves, stems, flowers and siliques.

The protein localises to the cytoplasm. It is found in the nucleus. Functionally, involved in the modulation of stomatal movement. Promotes stomatal opening. May play a role in the regulation of chitin signaling. May be involved in biotic and abiotic stress responses. The protein is IQ domain-containing protein IQM1 of Arabidopsis thaliana (Mouse-ear cress).